The sequence spans 188 residues: V-type ATP synthase subunit E (188 aa).

Belongs to the V-ATPase E subunit family.

Produces ATP from ADP in the presence of a proton gradient across the membrane. In Thermus thermophilus (strain ATCC 27634 / DSM 579 / HB8), this protein is V-type ATP synthase subunit E (atpE).